A 581-amino-acid polypeptide reads, in one-letter code: Protein LYRIC (581 aa).

The Lumenal portion of the chain corresponds to 1 to 49; it reads MAARSWQDELAQQAEEGSARLRELLSVGLGFLRTELGLDLGLEPKRYPS. The activation of NF-kappa-B stretch occupies residues 1-71; that stretch reads MAARSWQDEL…LLLFLLGYGW (71 aa). Residues 50–70 form a helical membrane-spanning segment; the sequence is WVILVGTGALGLLLLFLLGYG. Topologically, residues 71 to 581 are cytoplasmic; that stretch reads WAAACAGARK…KKKKKARRET (511 aa). Positions 72-168 are interaction with BCCIP; the sequence is AAACAGARKK…EKSKKNKKKS (97 aa). Positions 77 to 221 are disordered; that stretch reads GARKKRRSPP…DSGSLDSTIP (145 aa). Positions 100–204 are interaction with RELA; sequence EDPAQLKNLR…ISHREKRQQR (105 aa). Basic and acidic residues predominate over residues 108–126; it reads LRSEEQKKKNRKKLPEKPK. Thr142 is modified (phosphothreonine). Residues 159 to 168 show a composition bias toward basic residues; that stretch reads EKSKKNKKKS. The residue at position 179 (Ser179) is a Phosphoserine. Over residues 197–207 the composition is skewed to basic residues; that stretch reads HREKRQQRKRD. Phosphoserine occurs at positions 215 and 250. At Lys263 the chain carries N6-acetyllysine. The disordered stretch occupies residues 280–581; that stretch reads VNGGGWSEKS…KKKKKARRET (302 aa). Ser297, Ser305, and Ser310 each carry phosphoserine. The segment covering 318–331 has biased composition (polar residues); the sequence is QSAWTQDPGDTNAN. 2 positions are modified to phosphoserine: Ser343 and Ser368. Composition is skewed to polar residues over residues 353 to 371 and 382 to 393; these read EPVS…SRNQ and NGLSSADPSSDW. Residues 380 to 442 are lung-homing for mammary tumors; that stretch reads GLNGLSSADP…EGALPTGKSK (63 aa). Phosphoserine is present on residues Ser414 and Ser425. The span at 421–433 shows a compositional bias: basic and acidic residues; it reads DQKDSDDDKEKGE. The span at 440–450 shows a compositional bias: basic residues; the sequence is KSKKKKKKKKK. Phosphoserine occurs at positions 456, 477, 493, and 495. Polar residues-rich tracts occupy residues 519–535 and 548–567; these read PSVT…SSQV and NAKQ…NWES. At Ser567 the chain carries Phosphoserine. The segment covering 570–581 has biased composition (basic residues); it reads QIKKKKKARRET.

Interacts with BCCIP, CREBBP/CBP and RELA/p65. Widely expressed, with highest levels in liver, kidney, prostate and small intestine. Not detected in endothelial cells.

It localises to the endoplasmic reticulum membrane. Its subcellular location is the nucleus membrane. The protein resides in the cell junction. The protein localises to the tight junction. It is found in the nucleus. It localises to the nucleolus. Its subcellular location is the cytoplasm. The protein resides in the perinuclear region. Its function is as follows. Down-regulates SLC1A2/EAAT2 promoter activity when expressed ectopically. Activates the nuclear factor kappa-B (NF-kappa-B) transcription factor. Promotes anchorage-independent growth of immortalized melanocytes and astrocytes which is a key component in tumor cell expansion. Promotes lung metastasis and also has an effect on bone and brain metastasis, possibly by enhancing the seeding of tumor cells to the target organ endothelium. Induces chemoresistance. The polypeptide is Protein LYRIC (Mtdh) (Rattus norvegicus (Rat)).